The primary structure comprises 821 residues: DNA replication licensing factor MCM6 (821 aa).

Methionine 1 carries the N-acetylmethionine modification. 3 positions are modified to phosphoserine: serine 13, serine 219, and serine 271. Phosphothreonine is present on threonine 278. The 208-residue stretch at leucine 346–valine 553 folds into the MCM domain. ATP is bound by residues histidine 359, serine 399, threonine 400, alanine 401, lysine 402, serine 403, and asparagine 504. The Arginine finger motif lies at serine 528–aspartate 531. ADP is bound by residues arginine 619 and glutamate 622. Lysine 643 is modified (N6-acetyllysine). Residues valine 676–aspartate 706 form a disordered region. Serine 689 and serine 762 each carry phosphoserine. The residue at position 791 (threonine 791) is a Phosphothreonine.

It belongs to the MCM family. As to quaternary structure, component of the MCM2-7 complex. The complex forms a toroidal hexameric ring with the proposed subunit order MCM2-MCM6-MCM4-MCM7-MCM3-MCM5. Component of the CMG helicase complex, a hexameric ring of related MCM2-7 subunits stabilized by CDC45 and the tetrameric GINS complex. May interact with MCM10. Interacts with TIPIN. Interacts with CDT1. Interacts with MCMBP. Interacts with DDI2. Post-translationally, O-glycosylated (O-GlcNAcylated), in a cell cycle-dependent manner.

It localises to the nucleus. Its subcellular location is the chromosome. The catalysed reaction is ATP + H2O = ADP + phosphate + H(+). Its function is as follows. Acts as a component of the MCM2-7 complex (MCM complex) which is the replicative helicase essential for 'once per cell cycle' DNA replication initiation and elongation in eukaryotic cells. Core component of CDC45-MCM-GINS (CMG) helicase, the molecular machine that unwinds template DNA during replication, and around which the replisome is built. The active ATPase sites in the MCM2-7 ring are formed through the interaction surfaces of two neighboring subunits such that a critical structure of a conserved arginine finger motif is provided in trans relative to the ATP-binding site of the Walker A box of the adjacent subunit. The six ATPase active sites, however, are likely to contribute differentially to the complex helicase activity. The polypeptide is DNA replication licensing factor MCM6 (MCM6) (Bos taurus (Bovine)).